A 174-amino-acid chain; its full sequence is Calcineurin subunit B (174 aa).

EF-hand domains follow at residues 21 to 56, 60 to 88, 90 to 125, and 131 to 166; these read EEIE…SSNP, RLMD…FSGK, SKLD…MVGK, and ELQQ…KSVA. Positions 34, 36, 38, 40, 45, 66, 68, 70, 72, 77, 103, 105, 107, 109, 114, 144, 146, 148, 150, and 155 each coordinate Ca(2+).

This sequence belongs to the calcineurin regulatory subunit family. Composed of a catalytic subunit (A) and a regulatory subunit (B).

Regulatory subunit of calcineurin, a calcium-dependent, calmodulin stimulated protein phosphatase. Confers calcium sensitivity. This chain is Calcineurin subunit B (CNB1), found in Debaryomyces hansenii (strain ATCC 36239 / CBS 767 / BCRC 21394 / JCM 1990 / NBRC 0083 / IGC 2968) (Yeast).